Reading from the N-terminus, the 410-residue chain is E3 ubiquitin-protein ligase MARCHF4 (410 aa).

Residues M1 to G18 form the signal peptide. The tract at residues G92–S136 is disordered. The segment covering E100 to P112 has biased composition (pro residues). Over residues P126–S136 the composition is skewed to low complexity. The RING-CH-type zinc finger occupies D155 to I215. Residues C163, C166, C179, C181, H189, C192, C205, and C208 each contribute to the Zn(2+) site. 2 helical membrane passes run V238–S258 and L272–I292. Disordered regions lie at residues E324–L372 and P390–V410. Residues N333–S346 are compositionally biased toward polar residues. Residues A352 to G366 are compositionally biased toward low complexity.

As to expression, expressed in brain and placenta.

The protein localises to the golgi apparatus membrane. It carries out the reaction S-ubiquitinyl-[E2 ubiquitin-conjugating enzyme]-L-cysteine + [acceptor protein]-L-lysine = [E2 ubiquitin-conjugating enzyme]-L-cysteine + N(6)-ubiquitinyl-[acceptor protein]-L-lysine.. It participates in protein modification; protein ubiquitination. E3 ubiquitin-protein ligase that may mediate ubiquitination of MHC-I and CD4, and promote their subsequent endocytosis and sorting to lysosomes via multivesicular bodies. E3 ubiquitin ligases accept ubiquitin from an E2 ubiquitin-conjugating enzyme in the form of a thioester and then directly transfer the ubiquitin to targeted substrates. This is E3 ubiquitin-protein ligase MARCHF4 from Homo sapiens (Human).